The following is a 153-amino-acid chain: Arginine repressor (153 aa).

The protein belongs to the ArgR family.

It localises to the cytoplasm. It participates in amino-acid biosynthesis; L-arginine biosynthesis [regulation]. In terms of biological role, regulates arginine biosynthesis genes. This is Arginine repressor from Haemophilus ducreyi (strain 35000HP / ATCC 700724).